The sequence spans 665 residues: Putative phospholipid:diacylglycerol acyltransferase 2 (665 aa).

Residues 48 to 68 (LIGYLCTAWWLLLFLYHSVPV) form a helical membrane-spanning segment. The active-site Acyl-ester intermediate is serine 237. Catalysis depends on charge relay system residues aspartate 567 and histidine 620.

It belongs to the AB hydrolase superfamily. Lipase family.

The protein localises to the membrane. The enzyme catalyses a glycerophospholipid + a 1,2-diacyl-sn-glycerol = a monoacylglycerophospholipid + a triacyl-sn-glycerol. The protein is Putative phospholipid:diacylglycerol acyltransferase 2 (PDAT2) of Arabidopsis thaliana (Mouse-ear cress).